Reading from the N-terminus, the 451-residue chain is Bifunctional protein GlmU (451 aa).

Positions 1–229 are pyrophosphorylase; that stretch reads MQRHAIILAA…FDEIIGVNDR (229 aa). Residues 8-11, lysine 22, glutamine 72, and 77-78 contribute to the UDP-N-acetyl-alpha-D-glucosamine site; these read LAAG and GT. Residue aspartate 102 coordinates Mg(2+). 3 residues coordinate UDP-N-acetyl-alpha-D-glucosamine: glycine 139, glutamate 154, and asparagine 227. Asparagine 227 lines the Mg(2+) pocket. The segment at 230-250 is linker; that stretch reads LMLSEAEKALQQRINRYHMEN. The N-acetyltransferase stretch occupies residues 251-451; that stretch reads GVTIIDPSST…QVNKEGYLKK (201 aa). The UDP-N-acetyl-alpha-D-glucosamine site is built by arginine 332 and lysine 350. Histidine 362 serves as the catalytic Proton acceptor. UDP-N-acetyl-alpha-D-glucosamine contacts are provided by tyrosine 365 and asparagine 376. Residues 385–386, alanine 422, and arginine 439 contribute to the acetyl-CoA site; that span reads NY.

In the N-terminal section; belongs to the N-acetylglucosamine-1-phosphate uridyltransferase family. It in the C-terminal section; belongs to the transferase hexapeptide repeat family. Homotrimer. It depends on Mg(2+) as a cofactor.

The protein localises to the cytoplasm. It carries out the reaction alpha-D-glucosamine 1-phosphate + acetyl-CoA = N-acetyl-alpha-D-glucosamine 1-phosphate + CoA + H(+). It catalyses the reaction N-acetyl-alpha-D-glucosamine 1-phosphate + UTP + H(+) = UDP-N-acetyl-alpha-D-glucosamine + diphosphate. The protein operates within nucleotide-sugar biosynthesis; UDP-N-acetyl-alpha-D-glucosamine biosynthesis; N-acetyl-alpha-D-glucosamine 1-phosphate from alpha-D-glucosamine 6-phosphate (route II): step 2/2. It functions in the pathway nucleotide-sugar biosynthesis; UDP-N-acetyl-alpha-D-glucosamine biosynthesis; UDP-N-acetyl-alpha-D-glucosamine from N-acetyl-alpha-D-glucosamine 1-phosphate: step 1/1. It participates in bacterial outer membrane biogenesis; LPS lipid A biosynthesis. Its function is as follows. Catalyzes the last two sequential reactions in the de novo biosynthetic pathway for UDP-N-acetylglucosamine (UDP-GlcNAc). The C-terminal domain catalyzes the transfer of acetyl group from acetyl coenzyme A to glucosamine-1-phosphate (GlcN-1-P) to produce N-acetylglucosamine-1-phosphate (GlcNAc-1-P), which is converted into UDP-GlcNAc by the transfer of uridine 5-monophosphate (from uridine 5-triphosphate), a reaction catalyzed by the N-terminal domain. The protein is Bifunctional protein GlmU of Staphylococcus epidermidis (strain ATCC 35984 / DSM 28319 / BCRC 17069 / CCUG 31568 / BM 3577 / RP62A).